A 147-amino-acid chain; its full sequence is uncharacterized protein (147 aa).

Helical transmembrane passes span 35-55 and 62-82; these read TIQLAGWISVLFMLGYNFGNH and IWLLVITALLVIGLLIHLFEP.

Has been detected in a cytochrome bc1-aa3 supercomplex; its deletion however leaves complex activity unaffected.

The protein localises to the cell membrane. This is an uncharacterized protein from Corynebacterium glutamicum (strain ATCC 13032 / DSM 20300 / JCM 1318 / BCRC 11384 / CCUG 27702 / LMG 3730 / NBRC 12168 / NCIMB 10025 / NRRL B-2784 / 534).